Reading from the N-terminus, the 693-residue chain is Polyribonucleotide nucleotidyltransferase (693 aa).

Mg(2+)-binding residues include aspartate 485 and aspartate 491. The region spanning 552 to 611 is the KH domain; sequence PRIETMQINTSKIATVIGPGGKQIRQIIERSGAQVDINDNGLINISANTQESIDKAKELI. Residues 621-689 form the S1 motif domain; sequence GKIYNGRVTS…EKGQLKLSHK (69 aa).

This sequence belongs to the polyribonucleotide nucleotidyltransferase family. It depends on Mg(2+) as a cofactor.

It is found in the cytoplasm. It catalyses the reaction RNA(n+1) + phosphate = RNA(n) + a ribonucleoside 5'-diphosphate. Functionally, involved in mRNA degradation. Catalyzes the phosphorolysis of single-stranded polyribonucleotides processively in the 3'- to 5'-direction. The sequence is that of Polyribonucleotide nucleotidyltransferase from Chlamydia muridarum (strain MoPn / Nigg).